Consider the following 756-residue polypeptide: NADP-dependent malic enzyme (756 aa).

Positions 1-428 (MTEQLRQAAL…KLTQFVYKTS (428 aa)) are malic enzyme. Y39 serves as the catalytic Proton donor. The Proton acceptor role is filled by K94. E136, D137, and D162 together coordinate a divalent metal cation. Residues 195–198 (AGAA), N288, and N320 contribute to the NADP(+) site. A phosphate acetyltransferase region spans residues 429–756 (LFMRPIFSQA…AYAAVKAQQE (328 aa)).

It in the N-terminal section; belongs to the malic enzymes family. The protein in the C-terminal section; belongs to the phosphate acetyltransferase and butyryltransferase family. It depends on Mg(2+) as a cofactor. Mn(2+) serves as cofactor.

The catalysed reaction is (S)-malate + NADP(+) = pyruvate + CO2 + NADPH. The enzyme catalyses oxaloacetate + H(+) = pyruvate + CO2. This is NADP-dependent malic enzyme (maeB) from Haemophilus influenzae (strain ATCC 51907 / DSM 11121 / KW20 / Rd).